Reading from the N-terminus, the 329-residue chain is Aspartate carbamoyltransferase catalytic subunit (329 aa).

2 residues coordinate carbamoyl phosphate: R63 and T64. Residue K91 coordinates L-aspartate. R113, H141, and Q144 together coordinate carbamoyl phosphate. Residues R179 and R234 each contribute to the L-aspartate site. Carbamoyl phosphate-binding residues include G275 and P276.

The protein belongs to the aspartate/ornithine carbamoyltransferase superfamily. ATCase family. As to quaternary structure, heterododecamer (2C3:3R2) of six catalytic PyrB chains organized as two trimers (C3), and six regulatory PyrI chains organized as three dimers (R2).

It carries out the reaction carbamoyl phosphate + L-aspartate = N-carbamoyl-L-aspartate + phosphate + H(+). It participates in pyrimidine metabolism; UMP biosynthesis via de novo pathway; (S)-dihydroorotate from bicarbonate: step 2/3. In terms of biological role, catalyzes the condensation of carbamoyl phosphate and aspartate to form carbamoyl aspartate and inorganic phosphate, the committed step in the de novo pyrimidine nucleotide biosynthesis pathway. This chain is Aspartate carbamoyltransferase catalytic subunit, found in Magnetococcus marinus (strain ATCC BAA-1437 / JCM 17883 / MC-1).